Here is an 877-residue protein sequence, read N- to C-terminus: Phosphoenolpyruvate carboxylase (877 aa).

Residues histidine 138 and lysine 543 contribute to the active site.

It belongs to the PEPCase type 1 family. Requires Mg(2+) as cofactor.

It catalyses the reaction oxaloacetate + phosphate = phosphoenolpyruvate + hydrogencarbonate. Forms oxaloacetate, a four-carbon dicarboxylic acid source for the tricarboxylic acid cycle. The sequence is that of Phosphoenolpyruvate carboxylase from Aeromonas hydrophila subsp. hydrophila (strain ATCC 7966 / DSM 30187 / BCRC 13018 / CCUG 14551 / JCM 1027 / KCTC 2358 / NCIMB 9240 / NCTC 8049).